Here is a 107-residue protein sequence, read N- to C-terminus: DNA-directed RNA polymerase subunit omega (107 aa).

Belongs to the RNA polymerase subunit omega family. The RNAP catalytic core consists of 2 alpha, 1 beta, 1 beta' and 1 omega subunit. When a sigma factor is associated with the core the holoenzyme is formed, which can initiate transcription.

The catalysed reaction is RNA(n) + a ribonucleoside 5'-triphosphate = RNA(n+1) + diphosphate. Promotes RNA polymerase assembly. Latches the N- and C-terminal regions of the beta' subunit thereby facilitating its interaction with the beta and alpha subunits. The sequence is that of DNA-directed RNA polymerase subunit omega from Mycolicibacterium smegmatis (strain ATCC 700084 / mc(2)155) (Mycobacterium smegmatis).